The primary structure comprises 132 residues: Protein NrdI (132 aa).

This sequence belongs to the NrdI family.

Functionally, probably involved in ribonucleotide reductase function. This is Protein NrdI from Staphylococcus epidermidis (strain ATCC 35984 / DSM 28319 / BCRC 17069 / CCUG 31568 / BM 3577 / RP62A).